A 96-amino-acid polypeptide reads, in one-letter code: Co-chaperonin GroES (96 aa).

Belongs to the GroES chaperonin family. Heptamer of 7 subunits arranged in a ring. Interacts with the chaperonin GroEL.

The protein localises to the cytoplasm. Its function is as follows. Together with the chaperonin GroEL, plays an essential role in assisting protein folding. The GroEL-GroES system forms a nano-cage that allows encapsulation of the non-native substrate proteins and provides a physical environment optimized to promote and accelerate protein folding. GroES binds to the apical surface of the GroEL ring, thereby capping the opening of the GroEL channel. The protein is Co-chaperonin GroES of Buchnera aphidicola subsp. Acyrthosiphon pisum (strain 5A).